A 608-amino-acid polypeptide reads, in one-letter code: V-type ATP synthase subunit I (608 aa).

Helical transmembrane passes span 308–325, 327–346, 356–376, 405–425, 438–458, 464–484, 495–515, 517–537, and 550–570; these read ISFI…MIIG, AAYG…SFLL, GLIF…GTWF, IIFI…VWNF, IAQI…LNLI, FPMY…VFVF, CILK…SGFA, IISY…SASF, and IGLI…NIML.

It belongs to the V-ATPase 116 kDa subunit family.

Its subcellular location is the cell membrane. Produces ATP from ADP in the presence of a proton gradient across the membrane. This Borreliella burgdorferi (strain ATCC 35210 / DSM 4680 / CIP 102532 / B31) (Borrelia burgdorferi) protein is V-type ATP synthase subunit I (atpI).